The primary structure comprises 140 residues: Lysozyme c-1 (140 aa).

An N-terminal signal peptide occupies residues 1 to 20 (MKVFSTVLLAIVACCAVAEA). In terms of domain architecture, C-type lysozyme spans 21 to 140 (KTFGKCELAK…KKLPNVSSCF (120 aa)). 4 disulfides stabilise this stretch: Cys26–Cys139, Cys47–Cys128, Cys81–Cys94, and Cys90–Cys108. Residues Glu52 and Asp69 contribute to the active site.

Belongs to the glycosyl hydrolase 22 family. As to expression, expressed in salivary glands and Malpighian tubules.

The catalysed reaction is Hydrolysis of (1-&gt;4)-beta-linkages between N-acetylmuramic acid and N-acetyl-D-glucosamine residues in a peptidoglycan and between N-acetyl-D-glucosamine residues in chitodextrins.. Lysozymes have primarily a bacteriolytic function; those in tissues and body fluids are associated with the monocyte-macrophage system and enhance the activity of immunoagents. This chain is Lysozyme c-1, found in Anopheles gambiae (African malaria mosquito).